The primary structure comprises 312 residues: Olfactory receptor 10K2 (312 aa).

Residues 1–25 (MERVNETVVREVIFLGFSSLARLQQ) are Extracellular-facing. An N-linked (GlcNAc...) asparagine glycan is attached at asparagine 5. The helical transmembrane segment at 26 to 46 (LLFVIFLLLYLFTLGTNAIII) threads the bilayer. At 47 to 54 (STIVLDRA) the chain is on the cytoplasmic side. Residues 55 to 75 (LHIPMYFFLAILSCSEICYTF) traverse the membrane as a helical segment. Residues 76 to 99 (IIVPKMLVDLLSQKKTISFLGCAI) lie on the Extracellular side of the membrane. Residues 100-120 (QMFSFLFLGCSHSFLLAVMGY) traverse the membrane as a helical segment. At 121-139 (DRYIAICNPLRYSVLMGHG) the chain is on the cytoplasmic side. The chain crosses the membrane as a helical span at residues 140 to 160 (VCMGLVAAACACGFTVAQIIT). Residues 161 to 197 (SLVFHLPFYSSNQLHHFFCDIAPVLKLASHHNHFSQI) lie on the Extracellular side of the membrane. A helical transmembrane segment spans residues 198 to 217 (VIFMLCTLVLAIPLLLILVS). At 218 to 237 (YVHILSAILQFPSTLGRCKA) the chain is on the cytoplasmic side. Residues 238-258 (FSTCVSHLIIVTVHYGCASFI) traverse the membrane as a helical segment. Residues 259 to 271 (YLRPQSNYSSSQD) lie on the Extracellular side of the membrane. An N-linked (GlcNAc...) asparagine glycan is attached at asparagine 265. Residues 272 to 292 (ALISVSYTIITPLFNPMIYSL) traverse the membrane as a helical segment. The Cytoplasmic portion of the chain corresponds to 293-312 (RNKEFKSALCKIVRRTISLL).

Belongs to the G-protein coupled receptor 1 family.

The protein resides in the cell membrane. Functionally, odorant receptor. This is Olfactory receptor 10K2 (OR10K2) from Homo sapiens (Human).